Here is a 307-residue protein sequence, read N- to C-terminus: Pantothenate kinase (307 aa).

Position 87–94 (glycine 87–serine 94) interacts with ATP.

The protein belongs to the prokaryotic pantothenate kinase family.

Its subcellular location is the cytoplasm. It catalyses the reaction (R)-pantothenate + ATP = (R)-4'-phosphopantothenate + ADP + H(+). The protein operates within cofactor biosynthesis; coenzyme A biosynthesis; CoA from (R)-pantothenate: step 1/5. This chain is Pantothenate kinase, found in Vibrio vulnificus (strain YJ016).